A 196-amino-acid polypeptide reads, in one-letter code: SPRY domain-containing protein 7 (196 aa).

One can recognise a B30.2/SPRY domain in the interval 1–184; the sequence is MAASVFCCLR…FSEFYHTPPP (184 aa).

This is SPRY domain-containing protein 7 (SPRYD7) from Gallus gallus (Chicken).